A 443-amino-acid chain; its full sequence is Glutamate-rich protein 1 (443 aa).

K12 is subject to N6-acetyllysine. The disordered stretch occupies residues 15–333; that stretch reads QRLFPPVPSG…DASEEDDTIT (319 aa). The span at 42-54 shows a compositional bias: basic and acidic residues; the sequence is VTSEKVSQKHAEP. A compositionally biased stretch (polar residues) spans 87–97; the sequence is SCGSPENASSG. 2 stretches are compositionally biased toward basic residues: residues 109 to 124 and 159 to 176; these read PKRR…KKFK and KNKK…RKKA. A compositionally biased stretch (acidic residues) spans 205–226; sequence ACEEDGVDTSEEDPTLAGEEDV. S238 and S254 each carry phosphoserine. A compositionally biased stretch (acidic residues) spans 250 to 266; the sequence is GADASEEDPTPAGEEDV. Phosphothreonine is present on T277. The span at 281 to 296 shows a compositional bias: basic and acidic residues; sequence DLTRAGEEDGKDTREE. Acidic residues predominate over residues 297–332; sequence DGADASEEDPTWAGEEEGADSGEEDGADASEEDDTI.

The protein is Glutamate-rich protein 1 (ERICH1) of Homo sapiens (Human).